The primary structure comprises 111 residues: Large ribosomal subunit protein uL22 (111 aa).

This sequence belongs to the universal ribosomal protein uL22 family. Part of the 50S ribosomal subunit.

Its function is as follows. This protein binds specifically to 23S rRNA; its binding is stimulated by other ribosomal proteins, e.g. L4, L17, and L20. It is important during the early stages of 50S assembly. It makes multiple contacts with different domains of the 23S rRNA in the assembled 50S subunit and ribosome. In terms of biological role, the globular domain of the protein is located near the polypeptide exit tunnel on the outside of the subunit, while an extended beta-hairpin is found that lines the wall of the exit tunnel in the center of the 70S ribosome. This is Large ribosomal subunit protein uL22 from Polynucleobacter necessarius subsp. necessarius (strain STIR1).